The sequence spans 567 residues: Hexose transporter HXT16 (567 aa).

Residues 1 to 19 (MASEQSSPEINADNLNSSA) are compositionally biased toward polar residues. The interval 1-32 (MASEQSSPEINADNLNSSAADVHVQPPGEKEW) is disordered. Residues 1–55 (MASEQSSPEINADNLNSSAADVHVQPPGEKEWSDGFYDKEVINGNTPDAPKRGFL) lie on the Cytoplasmic side of the membrane. The chain crosses the membrane as a helical span at residues 56 to 76 (GYLIIYLLCYPVSFGGFLPGW). Residues 77–112 (DSGITAGFINMDNFKMNFGSYKHSTGEYYLSNVRMG) lie on the Extracellular side of the membrane. Residues 113–133 (LLVAMFSVGCSIGGVAFARLA) form a helical membrane-spanning segment. The Cytoplasmic portion of the chain corresponds to 134-139 (DTLGRR). The chain crosses the membrane as a helical span at residues 140 to 160 (LAIVIVVLVYMVGAIIQISSN). At 161 to 170 (HKWYQYFVGK) the chain is on the extracellular side. The chain crosses the membrane as a helical span at residues 171 to 191 (IIYGLGAGGCSVLCPMLLSEI). At 192 to 197 (APTDLR) the chain is on the cytoplasmic side. Residues 198-218 (GGLVSLYQLNMTFGIFLGYCS) form a helical membrane-spanning segment. Over 219–232 (VYGTRKYSNTAQWR) the chain is Extracellular. A helical transmembrane segment spans residues 233 to 253 (IPVGLCFLWALIIIVGMLLVP). Over 254-336 (ESPRYLIECE…VQTFLQLTGE (83 aa)) the chain is Cytoplasmic. Residues 337 to 353 (NYFFFYGTTIFKSVGLT) form a helical membrane-spanning segment. The Extracellular segment spans residues 354 to 359 (DGFETS). A helical membrane pass occupies residues 360-377 (IVLGTVNFFSTIIAVMVV). The Cytoplasmic segment spans residues 378-384 (DKIGRRK). Residues 385–405 (CLLFGAASMMACMVIFASIGV) traverse the membrane as a helical segment. The Extracellular segment spans residues 406 to 427 (KCLYPHGQDGPSSKGAGNAMIV). Residues 428–448 (FTCFYIFCFATTWAPVAYIVV) traverse the membrane as a helical segment. At 449 to 465 (AESFPSKVKSKAMSIST) the chain is on the cytoplasmic side. A helical transmembrane segment spans residues 466-486 (AFNWLWQFLIGFFTPFITGSI). Residue His487 is a topological domain, extracellular. The chain crosses the membrane as a helical span at residues 488–508 (FYYGYVFVGCLVAMFLYVFFF). At 509 to 567 (LPETIGLSLEETQLLYEEGIKPWKSASWVPPSRRGASSRETEAKKKSWKEVLKFPKSFN) the chain is on the cytoplasmic side. The segment at 533 to 555 (SASWVPPSRRGASSRETEAKKKS) is disordered. Basic and acidic residues predominate over residues 545-555 (SSRETEAKKKS).

This sequence belongs to the major facilitator superfamily. Sugar transporter (TC 2.A.1.1) family.

The protein localises to the membrane. Probable glucose transporter. This is Hexose transporter HXT16 (HXT16) from Saccharomyces cerevisiae (strain ATCC 204508 / S288c) (Baker's yeast).